Consider the following 497-residue polypeptide: Glycerol kinase 2 (497 aa).

T13 is an ADP binding site. 3 residues coordinate ATP: T13, T14, and S15. T13 lines the sn-glycerol 3-phosphate pocket. R17 is a binding site for ADP. Residues R83, E84, Y134, and D241 each coordinate sn-glycerol 3-phosphate. Glycerol contacts are provided by R83, E84, Y134, D241, and Q242. Residues T263 and G305 each coordinate ADP. ATP is bound by residues T263, G305, Q309, and G406. Residues G406 and N410 each coordinate ADP.

The protein belongs to the FGGY kinase family.

The enzyme catalyses glycerol + ATP = sn-glycerol 3-phosphate + ADP + H(+). The protein operates within polyol metabolism; glycerol degradation via glycerol kinase pathway; sn-glycerol 3-phosphate from glycerol: step 1/1. Key enzyme in the regulation of glycerol uptake and metabolism. Catalyzes the phosphorylation of glycerol to yield sn-glycerol 3-phosphate. This Sulfolobus acidocaldarius (strain ATCC 33909 / DSM 639 / JCM 8929 / NBRC 15157 / NCIMB 11770) protein is Glycerol kinase 2.